The primary structure comprises 371 residues: Putative RNA-binding protein Luc7-like 1 (371 aa).

Coiled-coil stretches lie at residues 87-177 (MDHL…RNSM) and 220-256 (QIRE…EERL). Residues 232-257 (VAEKQEKRNQDRLRRREEREREERLG) show a composition bias toward basic and acidic residues. Residues 232-371 (VAEKQEKRNQ…RSEEKEAGEI (140 aa)) are disordered. Residues 258–317 (RRSGSRTRDRRRSRSRDRRRRRSRSTSRERRKFSRSRSRDRYRRHRSRSRSHSRGHRRAS) show a composition bias toward basic residues. Basic and acidic residues-rich tracts occupy residues 318 to 351 (RDRS…DWRL) and 361 to 371 (RRSEEKEAGEI). Phosphoserine occurs at positions 336 and 363.

It belongs to the Luc7 family.

May bind to RNA via its Arg/Ser-rich domain. The sequence is that of Putative RNA-binding protein Luc7-like 1 (Luc7l) from Mus musculus (Mouse).